We begin with the raw amino-acid sequence, 417 residues long: Probable serpin E3 (417 aa).

The first 24 residues, 1–24 (MPQLSASSLFICLWLVDLCHVANS), serve as a signal peptide directing secretion. N-linked (GlcNAc...) asparagine glycosylation is found at Asn50, Asn106, Asn140, Asn147, and Asn152.

Belongs to the serpin family.

The protein resides in the secreted. Probable serine protease inhibitor. This Danio rerio (Zebrafish) protein is Probable serpin E3 (serpine3).